A 113-amino-acid polypeptide reads, in one-letter code: Iron-sulfur cluster insertion protein ErpA (113 aa).

Iron-sulfur cluster is bound by residues Cys-41, Cys-105, and Cys-107.

The protein belongs to the HesB/IscA family. As to quaternary structure, homodimer. Iron-sulfur cluster is required as a cofactor.

Required for insertion of 4Fe-4S clusters for at least IspG. The chain is Iron-sulfur cluster insertion protein ErpA from Glaesserella parasuis serovar 5 (strain SH0165) (Haemophilus parasuis).